The chain runs to 218 residues: Ras-related protein Rab-27B (218 aa).

N-acetylthreonine is present on Thr-2. 16–24 lines the GTP pocket; it reads GDSGVGKTT. An Effector region motif is present at residues 38–46; it reads FITTVGIDF. Residues 74–78, 133–136, and 163–165 each bind GTP; these read DTAGQ, NKAD, and SAA. The cysteines at positions 123 and 188 are disulfide-linked. A disordered region spans residues 193–218; it reads HIPDTVNGSSSGKLDGEKSAEKKCAC. Over residues 206 to 218 the composition is skewed to basic and acidic residues; the sequence is LDGEKSAEKKCAC. Residues Cys-216 and Cys-218 are each lipidated (S-geranylgeranyl cysteine). A Cysteine methyl ester modification is found at Cys-218.

This sequence belongs to the small GTPase superfamily. Rab family. In terms of assembly, interacts with SYTL2, SYTL4, MYRIP and MLPH. Interacts with RPH3A and RPH3A. Interacts (GDP-bound form preferentially) with DENND10. Expressed at an extraordinary high level (0.1% of total protein) in urothelium.

It is found in the membrane. It localises to the late endosome. The catalysed reaction is GTP + H2O = GDP + phosphate + H(+). Its activity is regulated as follows. Regulated by guanine nucleotide exchange factors (GEFs) which promote the exchange of bound GDP for free GTP, GTPase activating proteins (GAPs) which increase the GTP hydrolysis activity, and GDP dissociation inhibitors which inhibit the dissociation of the nucleotide from the GTPase. Activated by GEFs such as DENND10. In terms of biological role, small GTPase which cycles between active GTP-bound and inactive GDP-bound states. In its active state, binds to a variety of effector proteins to regulate homeostasis of late endocytic pathway, including endosomal positioning, maturation and secretion. Plays a role in NTRK2/TRKB axonal anterograde transport by facilitating the association of NTRK2/TRKB with KLC1. May be involved in targeting uroplakins to urothelial apical membranes. This chain is Ras-related protein Rab-27B (RAB27B), found in Bos taurus (Bovine).